A 1070-amino-acid polypeptide reads, in one-letter code: Envelopment polyprotein (1070 aa).

The first 17 residues, 1–17 (MMFSRVMQLALICAVTC), serve as a signal peptide directing secretion. Residues 18 to 457 (EDNPCLWERF…SNPQCYPYGK (440 aa)) lie on the Lumenal side of the membrane. Cystine bridges form between cysteine 22–cysteine 55, cysteine 152–cysteine 165, cysteine 211–cysteine 221, cysteine 267–cysteine 309, cysteine 296–cysteine 301, cysteine 353–cysteine 356, cysteine 360–cysteine 429, and cysteine 380–cysteine 385. Residue asparagine 269 is glycosylated (N-linked (GlcNAc...) asparagine; by host). A helical transmembrane segment spans residues 458 to 478 (WFLLFLILATLYIIVALLKTI). The Cytoplasmic segment spans residues 479 to 536 (MRIFMACLSVLYGPFIIIIKISRCLGRLGKRKGERTYVRLMEALDDERKPEVVRAPVS). Residues 480-522 (RIFMACLSVLYGPFIIIIKISRCLGRLGKRKGERTYVRLMEAL) are golgi retention signal. The segment at 541 to 560 (KQPRIVLFIVLALLVHMALC) is internal signal sequence for glycoprotein C. Residues 550–560 (VLALLVHMALC) constitute a propeptide that is removed on maturation. The Lumenal segment spans residues 550–1023 (VLALLVHMAL…NWLDTLFGAS (474 aa)). 10 disulfides stabilise this stretch: cysteine 561–cysteine 602, cysteine 574–cysteine 584, cysteine 642–cysteine 831, cysteine 648–cysteine 696, cysteine 654–cysteine 703, cysteine 659–cysteine 685, cysteine 689–cysteine 694, cysteine 799–cysteine 813, cysteine 896–cysteine 966, and cysteine 906–cysteine 909. Residues 648–654 (CRWAGSC) form a fusion loop region. A fusion loop region spans residues 690–701 (GGAACGCFNAAP). Residues 1024–1044 (LLGKILGIGLAILSPFILILI) traverse the membrane as a helical segment. Over 1045–1070 (LRWILRVVLRRSRIRREPKYEMAKYS) the chain is Cytoplasmic.

This sequence belongs to the phlebovirus envelope glycoprotein family. Heterodimer with glycoprotein C. As to quaternary structure, heterodimer with glycoprotein N. Homotrimer (postfusion). Post-translationally, specific enzymatic cleavages in vivo yield mature proteins Glycoprotein C, and Glycoprotein N. Glycosylated. In terms of processing, palmitoylated.

The protein localises to the virion membrane. The protein resides in the host Golgi apparatus membrane. It is found in the host endoplasmic reticulum membrane. In terms of biological role, structural component of the virion that interacts with glycoprotein C. It shields the hydrophobic fusion loops of the glycoprotein C, preventing premature fusion. The glycoprotein protrusions are arranged on an icosahedral lattice, with T=12 triangulation. They are able to attach the virion to the host cell receptor CD209/DC-SIGN and to promote fusion of membranes with the late endosome after endocytosis of the virion. Plays a role in the packaging of ribonucleoproteins during virus assembly. Its function is as follows. Structural component of the virion that interacts with glycoprotein N. Acts as a class II fusion protein that is activated upon acidification and subsequent repositioning of the glycoprotein N. The glycoprotein protrusions are arranged on an icosahedral lattice, with T=12 triangulation. They are able to attach the virion to the host cell receptor CD209/DC-SIGN and to promote fusion of membranes with the late endosome after endocytosis of the virion. In Amblyomma variegatum (Tropical bont tick), this protein is Envelopment polyprotein (GP).